The sequence spans 1986 residues: Protein Shroom3 (1986 aa).

The segment at 1-21 (MKTPENLEEPSATPNPSRTPT) is disordered. Residues 24-109 (FVYLEALLEG…TLRLVVRRDV (86 aa)) enclose the PDZ domain. Disordered stretches follow at residues 152–199 (CSEP…SSTS), 211–239 (RSPD…LLSP), 265–285 (TSSS…RSGS), 342–463 (QGCA…QPLL), and 564–1055 (NEDS…RRIF). The residue at position 212 (serine 212) is a Phosphoserine. 2 stretches are compositionally biased toward polar residues: residues 357–376 (PSPS…TDNL) and 415–425 (PQTNSSGSQKT). A compositionally biased stretch (basic and acidic residues) spans 430–440 (DQLHTVPERSP). Phosphoserine occurs at positions 439 and 443. Polar residues predominate over residues 595 to 607 (ACSNHHSLSSPQA). Positions 630 to 645 (QEDHNANLRQKVEREG) are enriched in basic and acidic residues. A compositionally biased stretch (polar residues) spans 653–677 (NSGRTRSAFSSLQNIPESLRRQSNV). Over residues 747–761 (SGASQRRLSSSSSAA) the composition is skewed to low complexity. Over residues 774–785 (KVSRIEEREQGR) the composition is skewed to basic and acidic residues. Low complexity-rich tracts occupy residues 796–814 (YGPG…TSSS) and 865–874 (DGRGPPARGG). Position 888 is a phosphoserine (serine 888). The span at 895 to 908 (EAEREASWSEDRPG) shows a compositional bias: basic and acidic residues. Threonine 909 is subject to Phosphothreonine. A phosphoserine mark is found at serine 912 and serine 969. The ASD1 domain maps to 927–1023 (IKDAQSRVLG…SEPEKMNEVG (97 aa)). Basic and acidic residues predominate over residues 1004–1020 (LTVEQKKRSYSEPEKMN). Serine 1063 and serine 1066 each carry phosphoserine. 4 disordered regions span residues 1083-1102 (YIQR…PEAG), 1107-1223 (AQSA…AEDL), 1304-1425 (ATVA…PPWV), and 1446-1654 (ANLK…KTSE). Residues 1114–1127 (AGPAAPDGPGLASA) show a composition bias toward low complexity. The span at 1134 to 1146 (REPEALPRKEHTH) shows a compositional bias: basic and acidic residues. Tryptophan 1175, valine 1179, and serine 1219 each carry phosphoserine. A compositionally biased stretch (low complexity) spans 1307–1318 (ASSAPPESSGAA). 2 positions are modified to phosphoserine: serine 1350 and serine 1354. Residues 1366 to 1399 (YRSQLAMDQQTGQQPPSSPASAVTQPTSPRSPEL) are compositionally biased toward polar residues. The span at 1455–1469 (PSRPSSCSTSDPDTP) shows a compositional bias: low complexity. The segment covering 1513–1524 (LPPPPPPSPPSE) has biased composition (pro residues). Polar residues predominate over residues 1581–1630 (EGSQIMTATPPQTSAKGSEAESNTPSSASAQPQLNGSPGKQLCPSQTRNL). Over residues 1634–1654 (PVERTQDLGKKTHAEPQKTSE) the composition is skewed to basic and acidic residues. The 289-residue stretch at 1659–1947 (EALAKEIVHQ…QVRCLLESLP (289 aa)) folds into the ASD2 domain. Residues 1844-1890 (RLARVENVLRGLGEDASKEERSSLNEKRKVLAGQHEDARELKENLDR) are a coiled coil.

The protein belongs to the shroom family. In terms of assembly, interacts with F-actin. Interacts with ROCK1.

It is found in the cell junction. The protein resides in the adherens junction. It localises to the cytoplasm. Its subcellular location is the cytoskeleton. The protein localises to the apical cell membrane. Its function is as follows. Controls cell shape changes in the neuroepithelium during neural tube closure. Induces apical constriction in epithelial cells by promoting the apical accumulation of F-actin and myosin II, and probably by bundling stress fibers. Induces apicobasal cell elongation by redistributing gamma-tubulin and directing the assembly of robust apicobasal microtubule arrays. The polypeptide is Protein Shroom3 (Shroom3) (Mus musculus (Mouse)).